A 554-amino-acid chain; its full sequence is MKEQLRACILKGIEGCFADGTLTSGEVPAINVEKPAHAEHGDFATNVAMQMAKQQRKAPRAVAEILVAKLAGASDLIESLEIAGPGFINFFIKDSAWRRTLTEIDRAGDAWGKSGIGRGKKVQVEFVSANPTGPLHIGHGRGAATGDAVASLLSAAGFDVQREYYINDAGNQMNTLGLSGLLRYKELLGEKIDFPETCYQGDYMKDIARDAVTKYGDRFLKVSQEDGVAFFSKMGGDLILAGIDQDLQDFGIRFDHWFSEQSLFDEGKVKSAIEEMQAKGLIYEQEGALWFRTTDYGDDKDRVVVRSNGVTTYFASDIAYHRDKFARGFDWVIDVWGADHHGYVPRLKSVVQGLGRDASDLGIILVQLVSLLRDGVPVAMSTRSGEFVTLKEVVDEVGRDAARFFFLMRRSDSQLDFDLELAKRQSNDNPVYYVQYAHARIKSIFDTARERGVEPRFDSVKLELLQTPEDLSLVKKLSVYPEILEGGAVNFEPHRITYYLQELAGEFHSFYNKSRVITPEEPELTQARLFLLHCVAITLKNALTVLGISAPERM.

Positions 129–139 match the 'HIGH' region motif; sequence ANPTGPLHIGH.

This sequence belongs to the class-I aminoacyl-tRNA synthetase family. Monomer.

It localises to the cytoplasm. The enzyme catalyses tRNA(Arg) + L-arginine + ATP = L-arginyl-tRNA(Arg) + AMP + diphosphate. The sequence is that of Arginine--tRNA ligase from Citrifermentans bemidjiense (strain ATCC BAA-1014 / DSM 16622 / JCM 12645 / Bem) (Geobacter bemidjiensis).